We begin with the raw amino-acid sequence, 485 residues long: NGFI-A-binding protein 1 (485 aa).

The segment at 4-82 (ALPRTLGELQ…RDWVTNPGLF (79 aa)) is NCD1. Residues K126, K129, and K143 each participate in a glycyl lysine isopeptide (Lys-Gly) (interchain with G-Cter in SUMO2) cross-link. The segment at 160 to 187 (WQGHHATESEHSLSPADVGSPASPKESS) is disordered. Phosphoserine is present on residues S171 and S182. K211 participates in a covalent cross-link: Glycyl lysine isopeptide (Lys-Gly) (interchain with G-Cter in SUMO2). Positions 220-309 (LLKNNKKLAK…ARQVSREVTY (90 aa)) are NCD2. Residues 306 to 337 (EVTYKYTYRTTRLKCGERDELSPKRIKVEDGF) form a necessary for nuclear localization region. Position 327 is a phosphoserine (S327). A Glycyl lysine isopeptide (Lys-Gly) (interchain with G-Cter in SUMO1); alternate cross-link involves residue K332. Residue K332 forms a Glycyl lysine isopeptide (Lys-Gly) (interchain with G-Cter in SUMO2); alternate linkage. Residues K354, K368, and K372 each participate in a glycyl lysine isopeptide (Lys-Gly) (interchain with G-Cter in SUMO2) cross-link. The interval 398-432 (RQSSGEHSPDGLPSDGSDGQGERPLNLRMPNVQNR) is disordered. S405 carries the post-translational modification Phosphoserine. Residues K452, K463, and K475 each participate in a glycyl lysine isopeptide (Lys-Gly) (interchain with G-Cter in SUMO2) cross-link. Residue K478 forms a Glycyl lysine isopeptide (Lys-Gly) (interchain with G-Cter in SUMO1); alternate linkage. Residue K478 forms a Glycyl lysine isopeptide (Lys-Gly) (interchain with G-Cter in SUMO2); alternate linkage.

It belongs to the NAB family. As to quaternary structure, homomultimers may associate with EGR1 bound to DNA.

Its subcellular location is the nucleus. Functionally, acts as a transcriptional repressor for zinc finger transcription factors EGR1 and EGR2. This is NGFI-A-binding protein 1 (NAB1) from Mesocricetus auratus (Golden hamster).